The chain runs to 122 residues: Serum amyloid A-2 protein (122 aa).

The signal sequence occupies residues 1–18 (MKPFLSIIFCFLVLGVDS). Gln19 is subject to Pyrrolidone carboxylic acid. Residues 100–122 (ANEWGRSGKDPNFFRPPGLPSKY) form a disordered region.

This sequence belongs to the SAA family. In terms of assembly, apolipoprotein of the HDL complex. In terms of tissue distribution, expressed by the liver; secreted in plasma.

It is found in the secreted. Functionally, major acute phase reactant. The sequence is that of Serum amyloid A-2 protein (SAA2) from Mesocricetus auratus (Golden hamster).